The sequence spans 336 residues: Fructose-1,6-bisphosphatase class 1 (336 aa).

Mg(2+)-binding residues include glutamate 90, aspartate 112, leucine 114, and aspartate 115. Substrate is bound by residues 115 to 118 (DGSS), asparagine 211, and lysine 277. A Mg(2+)-binding site is contributed by glutamate 283.

It belongs to the FBPase class 1 family. In terms of assembly, homotetramer. Requires Mg(2+) as cofactor.

The protein localises to the cytoplasm. The enzyme catalyses beta-D-fructose 1,6-bisphosphate + H2O = beta-D-fructose 6-phosphate + phosphate. It functions in the pathway carbohydrate biosynthesis; gluconeogenesis. This Pseudomonas paraeruginosa (strain DSM 24068 / PA7) (Pseudomonas aeruginosa (strain PA7)) protein is Fructose-1,6-bisphosphatase class 1.